The chain runs to 143 residues: MTIERTFSIVKPNAVAKNVIGAIFSRFESAGFKIVGSKMLHLSKEQAEGFYAEHQGKPFFDGLVEFMTSGPVVVSVLEGDNAVQRHRDLMGATNPANALAGTLRADYADSFTENATHGSDSAESAAREIAYFFGEGEICPRTR.

ATP is bound by residues Lys11, Phe59, Arg87, Thr93, Arg104, and Asn114. The active-site Pros-phosphohistidine intermediate is His117.

Belongs to the NDK family. In terms of assembly, homotetramer. Mg(2+) serves as cofactor.

Its subcellular location is the cytoplasm. The catalysed reaction is a 2'-deoxyribonucleoside 5'-diphosphate + ATP = a 2'-deoxyribonucleoside 5'-triphosphate + ADP. The enzyme catalyses a ribonucleoside 5'-diphosphate + ATP = a ribonucleoside 5'-triphosphate + ADP. Its function is as follows. Major role in the synthesis of nucleoside triphosphates other than ATP. The ATP gamma phosphate is transferred to the NDP beta phosphate via a ping-pong mechanism, using a phosphorylated active-site intermediate. In Erwinia tasmaniensis (strain DSM 17950 / CFBP 7177 / CIP 109463 / NCPPB 4357 / Et1/99), this protein is Nucleoside diphosphate kinase.